A 246-amino-acid polypeptide reads, in one-letter code: MADS-box transcription factor 14 (246 aa).

Residues 1 to 61 enclose the MADS-box domain; that stretch reads MGRGKVQLKR…GKLYEYATDS (61 aa). One can recognise a K-box domain in the interval 88–178; the sequence is QGNWCHEYRK…QKELVEKQKV (91 aa). The interval 180-199 is disordered; the sequence is KQQVQWDQTQPQTSSSSSSF.

May interact with the K-box of MADS1 and MADS6. In terms of tissue distribution, highly expressed in sterile lemmas, at intermediate levels in stamens, and weakly in lemmas, paleas and carpels.

It localises to the nucleus. Functionally, probable transcription factor. May be involved in the control of flowering time. In Oryza sativa subsp. japonica (Rice), this protein is MADS-box transcription factor 14 (MADS14).